We begin with the raw amino-acid sequence, 192 residues long: Shikimate kinase (192 aa).

27-32 provides a ligand contact to ATP; sequence GTGKTT. Residue Thr-31 coordinates Mg(2+). The substrate site is built by Asp-49, Arg-73, and Gly-95. Residue Arg-133 coordinates ATP. Arg-152 contributes to the substrate binding site.

Belongs to the shikimate kinase family. As to quaternary structure, monomer. Mg(2+) is required as a cofactor.

It localises to the cytoplasm. The catalysed reaction is shikimate + ATP = 3-phosphoshikimate + ADP + H(+). It participates in metabolic intermediate biosynthesis; chorismate biosynthesis; chorismate from D-erythrose 4-phosphate and phosphoenolpyruvate: step 5/7. Functionally, catalyzes the specific phosphorylation of the 3-hydroxyl group of shikimic acid using ATP as a cosubstrate. This is Shikimate kinase from Hahella chejuensis (strain KCTC 2396).